The following is an 88-amino-acid chain: Small ribosomal subunit protein uS17 (88 aa).

This sequence belongs to the universal ribosomal protein uS17 family. In terms of assembly, part of the 30S ribosomal subunit.

Its function is as follows. One of the primary rRNA binding proteins, it binds specifically to the 5'-end of 16S ribosomal RNA. This is Small ribosomal subunit protein uS17 from Saccharophagus degradans (strain 2-40 / ATCC 43961 / DSM 17024).